The chain runs to 227 residues: Cytochrome c oxidase subunit 2 (227 aa).

Topologically, residues 1-26 (MATWSNFNLQNSASPLMEQIIFFHDH) are mitochondrial intermembrane. The chain crosses the membrane as a helical span at residues 27-51 (TLVILIMITILVGYLMISLFFNSYI). The Mitochondrial matrix segment spans residues 52-62 (NRFLLEGQMIE). A helical transmembrane segment spans residues 63 to 81 (LIWTILPAITLIFIALPSL). The Mitochondrial intermembrane segment spans residues 82–227 (RLLYLLDELN…NFINWINNYS (146 aa)). 6 residues coordinate Cu cation: His161, Cys196, Glu198, Cys200, His204, and Met207. Mg(2+) is bound at residue Glu198.

This sequence belongs to the cytochrome c oxidase subunit 2 family. Component of the cytochrome c oxidase (complex IV, CIV), a multisubunit enzyme composed of a catalytic core of 3 subunits and several supernumerary subunits. The complex exists as a monomer or a dimer and forms supercomplexes (SCs) in the inner mitochondrial membrane with ubiquinol-cytochrome c oxidoreductase (cytochrome b-c1 complex, complex III, CIII). Requires Cu cation as cofactor.

The protein localises to the mitochondrion inner membrane. The catalysed reaction is 4 Fe(II)-[cytochrome c] + O2 + 8 H(+)(in) = 4 Fe(III)-[cytochrome c] + 2 H2O + 4 H(+)(out). Component of the cytochrome c oxidase, the last enzyme in the mitochondrial electron transport chain which drives oxidative phosphorylation. The respiratory chain contains 3 multisubunit complexes succinate dehydrogenase (complex II, CII), ubiquinol-cytochrome c oxidoreductase (cytochrome b-c1 complex, complex III, CIII) and cytochrome c oxidase (complex IV, CIV), that cooperate to transfer electrons derived from NADH and succinate to molecular oxygen, creating an electrochemical gradient over the inner membrane that drives transmembrane transport and the ATP synthase. Cytochrome c oxidase is the component of the respiratory chain that catalyzes the reduction of oxygen to water. Electrons originating from reduced cytochrome c in the intermembrane space (IMS) are transferred via the dinuclear copper A center (CU(A)) of subunit 2 and heme A of subunit 1 to the active site in subunit 1, a binuclear center (BNC) formed by heme A3 and copper B (CU(B)). The BNC reduces molecular oxygen to 2 water molecules using 4 electrons from cytochrome c in the IMS and 4 protons from the mitochondrial matrix. The chain is Cytochrome c oxidase subunit 2 (COII) from Choristoneura fumiferana (Spruce budworm moth).